A 1093-amino-acid polypeptide reads, in one-letter code: Regulator of nonsense transcripts 1 homolog (1093 aa).

Residues 42–79 (YGVYGGRGPRGNGRRRHDDDDNETEVLDDDDDESLASV) are disordered. Positions 61-75 (DDNETEVLDDDDDES) are enriched in acidic residues. A Upf1 CH-rich domain is found at 95–252 (EKELPPHACA…AKLEEMWKEA (158 aa)). Zn(2+) contacts are provided by Cys-103, Cys-106, Cys-117, Cys-120, Cys-125, His-135, His-139, His-145, Cys-163, Cys-166, Cys-189, and Cys-193. The tract at residues 103–135 (CAYCGIHSPSSVVKCLTCNKWFCSAKGSAFSSH) is C3H. Positions 117–145 (CLTCNKWFCSAKGSAFSSHIVNHLVRARH) are CC/SHH/C. Positions 163–193 (CYNCGTKNVFILGFIPAKSDTVVVLLCRQPC) are C4. ATP is bound by residues Gln-460, 480-484 (GTGKT), Gln-650, Tyr-687, and Glu-818.

It belongs to the DNA2/NAM7 helicase family.

Its subcellular location is the cytoplasm. It carries out the reaction ATP + H2O = ADP + phosphate + H(+). Functionally, RNA-dependent helicase required for nonsense-mediated decay (NMD) of aberrant mRNAs containing premature stop codons and modulates the expression level of normal mRNAs. Also capable of unwinding double-stranded DNA and translocating on single-stranded DNA. In Neurospora crassa (strain ATCC 24698 / 74-OR23-1A / CBS 708.71 / DSM 1257 / FGSC 987), this protein is Regulator of nonsense transcripts 1 homolog.